The following is a 130-amino-acid chain: Histone H2A.1 (130 aa).

A disordered region spans residues 1–22 (MSGGKGKAGSSEKASTSRSAKA). At serine 2 the chain carries N-acetylserine. An N6-acetyllysine mark is found at lysine 5 and lysine 7. At glutamine 105 the chain carries N5-methylglutamine. A Phosphoserine modification is found at serine 127. The short motif at 127 to 128 (SQ) is the [ST]-Q motif element.

Belongs to the histone H2A family. As to quaternary structure, the nucleosome is a histone octamer containing two molecules each of H2A, H2B, H3 and H4 assembled in one H3-H4 heterotetramer and two H2A-H2B heterodimers. The octamer wraps approximately 147 bp of DNA. In terms of processing, phosphorylated to form H2AS128ph (gamma-H2A) in response to DNA double-strand breaks (DSBs) generated by exogenous genotoxic agents and by stalled replication forks. Phosphorylation is dependent on the DNA damage checkpoint kinases MEC1/ATR and TEL1/ATM, spreads on either side of a detected DSB site and may mark the surrounding chromatin for recruitment of proteins required for DNA damage signaling and repair. Gamma-H2A is removed from the DNA prior to the strand invasion-primer extension step of the repair process and subsequently dephosphorylated. Dephosphorylation is necessary for efficient recovery from the DNA damage checkpoint. Post-translationally, acetylated by ESA1 to form H2AK4ac and H2AK7ac.

It localises to the nucleus. Its subcellular location is the chromosome. Core component of nucleosome which plays a central role in DNA double strand break (DSB) repair. Nucleosomes wrap and compact DNA into chromatin, limiting DNA accessibility to the cellular machineries which require DNA as a template. Histones thereby play a central role in transcription regulation, DNA repair, DNA replication and chromosomal stability. DNA accessibility is regulated via a complex set of post-translational modifications of histones, also called histone code, and nucleosome remodeling. In Lodderomyces elongisporus (strain ATCC 11503 / CBS 2605 / JCM 1781 / NBRC 1676 / NRRL YB-4239) (Yeast), this protein is Histone H2A.1 (HTA1).